A 277-amino-acid polypeptide reads, in one-letter code: Diaminopimelate epimerase (277 aa).

Asn-11 and Asn-62 together coordinate substrate. Residue Cys-71 is the Proton donor of the active site. Substrate-binding positions include 72–73, Asn-160, Asn-193, and 211–212; these read GN and ER. The Proton acceptor role is filled by Cys-220. Substrate is bound at residue 221–222; the sequence is GT.

The protein belongs to the diaminopimelate epimerase family. In terms of assembly, homodimer.

Its subcellular location is the cytoplasm. It catalyses the reaction (2S,6S)-2,6-diaminopimelate = meso-2,6-diaminopimelate. Its pathway is amino-acid biosynthesis; L-lysine biosynthesis via DAP pathway; DL-2,6-diaminopimelate from LL-2,6-diaminopimelate: step 1/1. Its function is as follows. Catalyzes the stereoinversion of LL-2,6-diaminopimelate (L,L-DAP) to meso-diaminopimelate (meso-DAP), a precursor of L-lysine. This Methanococcus maripaludis (strain C5 / ATCC BAA-1333) protein is Diaminopimelate epimerase.